We begin with the raw amino-acid sequence, 144 residues long: Large ribosomal subunit protein uL11 (144 aa).

The protein belongs to the universal ribosomal protein uL11 family. As to quaternary structure, part of the ribosomal stalk of the 50S ribosomal subunit. Interacts with L10 and the large rRNA to form the base of the stalk. L10 forms an elongated spine to which L12 dimers bind in a sequential fashion forming a multimeric L10(L12)X complex. One or more lysine residues are methylated.

Forms part of the ribosomal stalk which helps the ribosome interact with GTP-bound translation factors. In Gluconobacter oxydans (strain 621H) (Gluconobacter suboxydans), this protein is Large ribosomal subunit protein uL11.